Here is a 395-residue protein sequence, read N- to C-terminus: MGTAPAYSLDGGRSLHRWLRDMREHHPVHRELLTRVWTLYRYRDITQATADPAVFSSELWRYLPGDRGDDALTAGNLTAMDPPRHRLVRDLVSRSFTARAVGALRPRIAAIAAELIGAVADRGEMDVVADLSDPLPVLVIGELLGLPMADRELLSDWARRLLSFDKGDLTDEVVRKRVADTQQELLDYLRVHCRRRRTNPQDDLISRLIRAEVDGQRLTEDEVVNFANLLLLAGHVTTTLLLANIVLTLDEHPAVAAEARADRGLIPGLIEETLRYRPVIVSNMRVTTRAVTVGTEQLPAGQLVSLSFISGNRDEQYFTDPDRFDIHRDARKHLGFGHGIHYCLGAPLARLELGIALDAMFDRFSRIEVTGVPVDYYDTPGVAGPRSLRIAFRHH.

It belongs to the cytochrome P450 family.

In terms of biological role, cytochrome P450; part of the gene cluster that mediates the biosynthesis of cyclic heptapeptides, known as cyclomarins and also of cyclic dipeptides, called cyclomarazines, which have both antimicrobial and cytotoxic effects. First, CymD catalyzes the reverse N-prenylation of monomeric L-tryptophan with dimethylallyl diphosphate (DMAPP) to form N-(1,1-dimethylallyl)-tryptophan (r-N-DMAT). The N-(1,1-dimethylallyl)-tryptophan produced by CymD is then combined with a range of standard and nonproteinogenic amino acid substrates to synthesize the peptides, a process that is probably catalyzed by the non-canonical nonribosomal peptide synthetase (NRPS), CymA. Other proteins in the cluster catalyze further modifications of the peptides including CymV which catalyzes the oxidation of olefinic cyclomarins and cyclomarazines to their respective epoxide derivatives. The polypeptide is Cyclomarin C epoxidase CymV (Salinispora arenicola (strain CNS-205)).